We begin with the raw amino-acid sequence, 48 residues long: Toxin CSTX-14 (48 aa).

Disulfide bonds link C3–C18, C10–C27, C17–C42, and C29–C40.

This sequence belongs to the neurotoxin 19 (CSTX) family. 12 subfamily. As to quaternary structure, heterodimer of A and B chains; disulfide-linked. Post-translationally, contains 4 disulfide bonds. Expressed by the venom gland.

Its subcellular location is the secreted. This Cupiennius salei (American wandering spider) protein is Toxin CSTX-14.